A 493-amino-acid chain; its full sequence is Cysteine--tRNA ligase (493 aa).

Residue C29 participates in Zn(2+) binding. The 'HIGH' region signature appears at 31-41 (VTVYDLSHIGH). Positions 209, 234, and 238 each coordinate Zn(2+). Positions 266 to 270 (KMSKS) match the 'KMSKS' region motif. K269 provides a ligand contact to ATP.

The protein belongs to the class-I aminoacyl-tRNA synthetase family. Monomer. Zn(2+) is required as a cofactor.

It is found in the cytoplasm. It catalyses the reaction tRNA(Cys) + L-cysteine + ATP = L-cysteinyl-tRNA(Cys) + AMP + diphosphate. The protein is Cysteine--tRNA ligase of Syntrophobacter fumaroxidans (strain DSM 10017 / MPOB).